Here is a 249-residue protein sequence, read N- to C-terminus: Small ribosomal subunit protein uS2 (249 aa).

It belongs to the universal ribosomal protein uS2 family.

The chain is Small ribosomal subunit protein uS2 from Acinetobacter baylyi (strain ATCC 33305 / BD413 / ADP1).